The following is a 397-amino-acid chain: Phosphoglycerate transport regulatory protein PgtC (397 aa).

Residues methionine 1–alanine 24 form the signal peptide. A helical membrane pass occupies residues threonine 102 to arginine 117.

Its subcellular location is the cell membrane. Required for pgtP expression, it may act jointly with the PgtA/PgtB signaling proteins. The chain is Phosphoglycerate transport regulatory protein PgtC (pgtC) from Salmonella typhi.